The sequence spans 205 residues: Ribonuclease HII (205 aa).

The RNase H type-2 domain occupies 14-205; it reads SLISGIDEAG…SFRLKQLGEK (192 aa). Asp20, Glu21, and Asp117 together coordinate a divalent metal cation.

This sequence belongs to the RNase HII family. Mn(2+) serves as cofactor. Mg(2+) is required as a cofactor.

Its subcellular location is the cytoplasm. It carries out the reaction Endonucleolytic cleavage to 5'-phosphomonoester.. Its function is as follows. Endonuclease that specifically degrades the RNA of RNA-DNA hybrids. The chain is Ribonuclease HII from Chlorobium phaeobacteroides (strain DSM 266 / SMG 266 / 2430).